The chain runs to 1067 residues: Kinesin-like protein KIF11-A (1067 aa).

The region spanning 18 to 359 (NIQVVVRCRP…LDYASRAKNI (342 aa)) is the Kinesin motor domain. 105 to 112 (GQTGTGKT) lines the ATP pocket. 3 coiled-coil regions span residues 365–480 (VNQK…QEAF), 692–721 (DSSS…HSEG), and 882–915 (QAQE…QVQS). The residue at position 937 (Thr-937) is a Phosphothreonine; by CDK1. A Phosphoserine; by NEK6 modification is found at Ser-1046.

It belongs to the TRAFAC class myosin-kinesin ATPase superfamily. Kinesin family. BimC subfamily. In terms of assembly, heterotetramer of two heavy and two light chains. Interacts with aurka. In terms of processing, phosphorylation of Thr-937 during mitosis controls the association of this protein with the spindle apparatus. A subset of this protein primarily localized at the spindle pole is phosphorylated by NEK6 during mitosis. Post-translationally, phosphorylated on a serine residue by aurka. As to expression, highly expressed in unfertilized eggs, especially in the germinal vesicle and in the radial yolk-poor channels. Also present in testis.

The protein resides in the cytoplasm. Its subcellular location is the cytoskeleton. It localises to the spindle pole. Plus end-directed motor protein required for establishing a bipolar spindle. Associates with both interphase and spindle microtubules. May be involved in nuclear divisions taking place during the development of unfertilized eggs. Required in non-mitotic cells for transport of secretory proteins from the Golgi complex to the cell surface. The sequence is that of Kinesin-like protein KIF11-A (kif11-a) from Xenopus laevis (African clawed frog).